The primary structure comprises 810 residues: Phospholipase D alpha 1 (810 aa).

Positions methionine 1–asparagine 36 are excised as a propeptide. A C2 domain is found at methionine 1–valine 126. Aspartate 187 contacts Ca(2+). Positions alanine 327–arginine 366 constitute a PLD phosphodiesterase 1 domain. Catalysis depends on residues histidine 332, lysine 334, and aspartate 339. Residue histidine 332 participates in a 1,2-diacyl-sn-glycero-3-phosphate binding. Ca(2+)-binding residues include histidine 372 and histidine 406. Residues glutamine 522 and histidine 661 each coordinate a 1,2-diacyl-sn-glycero-3-phosphate. Positions phenylalanine 656–serine 683 constitute a PLD phosphodiesterase 2 domain. Active-site residues include histidine 661, lysine 663, and aspartate 668. Residue glutamate 722 coordinates Ca(2+).

It belongs to the phospholipase D family. C2-PLD subfamily. Ca(2+) serves as cofactor.

The protein resides in the cytoplasm. It localises to the membrane. The catalysed reaction is a 1,2-diacyl-sn-glycero-3-phosphocholine + H2O = a 1,2-diacyl-sn-glycero-3-phosphate + choline + H(+). In terms of biological role, hydrolyzes glycerol-phospholipids at the terminal phosphodiesteric bond. Plays an important role in various cellular processes, including phytohormone action, vesicular trafficking, secretion, cytoskeletal arrangement, meiosis, tumor promotion, pathogenesis, membrane deterioration and senescence. The sequence is that of Phospholipase D alpha 1 (PLD1) from Brassica oleracea var. capitata (Cabbage).